Consider the following 467-residue polypeptide: Ran-binding protein M homolog (467 aa).

The tract at residues 1–25 is disordered; it reads MNSSPPPANSANGDTTNNGENGQDL. Polar residues predominate over residues 9 to 25; sequence NSANGDTTNNGENGQDL. In terms of domain architecture, B30.2/SPRY spans 31 to 219; sequence DKIRLSAKRD…VLVNFGKKKF (189 aa). Positions 244-276 constitute a LisH domain; that stretch reads PPNIGYGLVKTYLLHYGYEETLDAFNLATKNTV. A CTLH domain is found at 295–353; it reads ALKQRKNLRQLVRNGEIDTALAELQKLYPQIVQDDKSVVCFLLHCQKFIELVRVGKLEE.

Belongs to the RANBP9/10 family. Interacts with WDR36, WDS, GID8, MAEA and RMD5.

It localises to the cytoplasm. It is found in the nucleus. The protein resides in the perinuclear region. The protein is Ran-binding protein M homolog of Arabidopsis thaliana (Mouse-ear cress).